We begin with the raw amino-acid sequence, 68 residues long: Urocalcin (68 aa).

An N-terminal signal peptide occupies residues 1 to 27; the sequence is MKASTLVVIFIVIFITISSFSIHDVQA. Residues 28–35 constitute a propeptide that is removed on maturation; it reads SGVEKREQ. 3 disulfides stabilise this stretch: cysteine 38–cysteine 52, cysteine 45–cysteine 56, and cysteine 51–cysteine 67. Residues 57–59 form an essential for stimulation of [3H]ryanodine binding to RYR1 region; that stretch reads KRR.

This sequence belongs to the scorpion calcin family. In terms of tissue distribution, expressed by the venom gland.

It is found in the secreted. Its function is as follows. This toxin only weakly stabilizes ryanodine receptor 1 (RyR1) opening in a long-lasting subconductance state (55% of the full conductance state obtained only at high concentrations (1 uM)). In addition, it has been shown to dose-dependently stimulate ryanodine binding to RyR1 with the lowest activity of all calcins (EC(50)=376 nM). It also augments the bell-shaped calcium-[3H]ryanodine binding curve that is maximal at about 10 uM calcium concentration. It binds a different site as ryanodine. It acts synergistically with caffeine. In contrast to other calcins, it does not trigger calcium release from sarcoplasmic vesicles even at high concentration (1 uM). In vivo, intracerebroventricular injection into mice induces neurotoxic symptoms, followed by death. The protein is Urocalcin of Urodacus yaschenkoi (Inland robust scorpion).